We begin with the raw amino-acid sequence, 208 residues long: Small ribosomal subunit protein uS4B (208 aa).

Positions 95-160 constitute an S4 RNA-binding domain; the sequence is KRLDNVVFRL…NQVYMAAKQA (66 aa).

This sequence belongs to the universal ribosomal protein uS4 family. As to quaternary structure, part of the 30S ribosomal subunit. Contacts protein S5. The interaction surface between S4 and S5 is involved in control of translational fidelity.

Its function is as follows. One of the primary rRNA binding proteins, it binds directly to 16S rRNA where it nucleates assembly of the body of the 30S subunit. In terms of biological role, with S5 and S12 plays an important role in translational accuracy. The sequence is that of Small ribosomal subunit protein uS4B from Bdellovibrio bacteriovorus (strain ATCC 15356 / DSM 50701 / NCIMB 9529 / HD100).